The chain runs to 359 residues: Probable L-ascorbate peroxidase 7, chloroplastic (359 aa).

Residues 1 to 71 constitute a chloroplast transit peptide; that stretch reads MAAQRLAALH…KAAGSGRSVM (71 aa). H118 serves as the catalytic Proton acceptor. H247 contacts heme b. T248 is a K(+) binding site. Residues 251–277 are disordered; the sequence is RSRPERSGWGKPETKYTKNGPGAPGGQ. The segment covering 252–266 has biased composition (basic and acidic residues); it reads SRPERSGWGKPETKY. T280 and D287 together coordinate K(+).

Belongs to the peroxidase family. Ascorbate peroxidase subfamily. Requires heme b as cofactor. As to expression, expressed in roots, leaves, stems and flowers.

Its subcellular location is the plastid. The protein resides in the chloroplast stroma. The enzyme catalyses L-ascorbate + H2O2 = L-dehydroascorbate + 2 H2O. Functionally, plays a key role in hydrogen peroxide removal. This is Probable L-ascorbate peroxidase 7, chloroplastic from Oryza sativa subsp. japonica (Rice).